A 159-amino-acid chain; its full sequence is uncharacterized protein (159 aa).

A disordered region spans residues 1–139 (MSRRAPGSRL…RKSQERSMSY (139 aa)). Residues 9–31 (RLSSGGTNYSRSWNDWQPRTDSA) are compositionally biased toward polar residues. A compositionally biased stretch (basic and acidic residues) spans 65 to 82 (QRHDDTRVHADIQNDEKG). The span at 105–119 (RVNNVTSPEFTSVQH) shows a compositional bias: polar residues. A compositionally biased stretch (basic and acidic residues) spans 125 to 134 (ATKDMRKSQE).

This is an uncharacterized protein from Homo sapiens (Human).